The chain runs to 309 residues: GTP cyclohydrolase MptA (309 aa).

The protein belongs to the GTP cyclohydrolase IV family. In terms of assembly, homodimer. Fe(2+) is required as a cofactor.

It catalyses the reaction GTP + H2O = 7,8-dihydroneopterin 2',3'-cyclic phosphate + formate + diphosphate + H(+). The protein operates within cofactor biosynthesis; 5,6,7,8-tetrahydromethanopterin biosynthesis. Converts GTP to 7,8-dihydro-D-neopterin 2',3'-cyclic phosphate, the first intermediate in the biosynthesis of coenzyme methanopterin. In Haloarcula marismortui (strain ATCC 43049 / DSM 3752 / JCM 8966 / VKM B-1809) (Halobacterium marismortui), this protein is GTP cyclohydrolase MptA.